The primary structure comprises 93 residues: UPF0728 protein C10orf53 homolog (93 aa).

This sequence belongs to the UPF0728 family.

This chain is UPF0728 protein C10orf53 homolog, found in Mus musculus (Mouse).